A 199-amino-acid polypeptide reads, in one-letter code: Nuclear transcription factor Y subunit C-2 (199 aa).

It belongs to the NFYC/HAP5 subunit family. In terms of assembly, heterotrimeric transcription factor composed of three components, NF-YA, NF-YB and NF-YC. NF-YB and NF-YC must interact and dimerize for NF-YA association and DNA binding. Interacts with HTT1 in both cytoplasm and nucleus. Ubiquitous.

The protein localises to the nucleus. It is found in the cytoplasm. Its function is as follows. Stimulates the transcription of various genes by recognizing and binding to a CCAAT motif in promoters. The sequence is that of Nuclear transcription factor Y subunit C-2 (NFYC2) from Arabidopsis thaliana (Mouse-ear cress).